Consider the following 406-residue polypeptide: 8-amino-7-oxononanoate synthase (406 aa).

Residue Arg-21 coordinates substrate. 112-113 (GY) lines the pyridoxal 5'-phosphate pocket. His-137 is a substrate binding site. 3 residues coordinate pyridoxal 5'-phosphate: Ser-183, His-211, and Thr-239. An N6-(pyridoxal phosphate)lysine modification is found at Lys-242. Thr-358 provides a ligand contact to substrate.

Belongs to the class-II pyridoxal-phosphate-dependent aminotransferase family. BioF subfamily. As to quaternary structure, homodimer. Pyridoxal 5'-phosphate serves as cofactor.

The catalysed reaction is 6-carboxyhexanoyl-[ACP] + L-alanine + H(+) = (8S)-8-amino-7-oxononanoate + holo-[ACP] + CO2. It participates in cofactor biosynthesis; biotin biosynthesis. Catalyzes the decarboxylative condensation of pimeloyl-[acyl-carrier protein] and L-alanine to produce 8-amino-7-oxononanoate (AON), [acyl-carrier protein], and carbon dioxide. In Burkholderia cenocepacia (strain HI2424), this protein is 8-amino-7-oxononanoate synthase.